A 229-amino-acid chain; its full sequence is Synaptogyrin-3 (229 aa).

An N-acetylmethionine modification is found at M1. One can recognise an MARVEL domain in the interval 20–172; it reads FARRPQTLLR…LTVKALQRFR (153 aa). 4 helical membrane passes run 30–50, 70–90, 105–125, and 148–168; these read VVSWVFSIAVFGPIVNEGYVN, FGVVLGLGAFIACVAFLLLDV, VLLDLGFSGVWSFLWFVGFCF, and AAIAFSFFSILSWVALTVKAL. Polar residues predominate over residues 209 to 223; the sequence is QSPPFTETLDTSSKG. Positions 209–229 are disordered; it reads QSPPFTETLDTSSKGYQVPAY.

Belongs to the synaptogyrin family. In terms of assembly, interacts (via N-terminus) with SLC6A3 (via N-terminus). May interact with VMAT2. In terms of tissue distribution, specifically expressed in brain. Found in the brain across the dorsal and ventral corpus striatum as well as in the cortex.

The protein localises to the cytoplasmic vesicle. It localises to the secretory vesicle. It is found in the synaptic vesicle membrane. Its subcellular location is the synapse. May play a role in regulated exocytosis. May indirectly regulate the activity of the plasma membrane dopamine transporter SLC6A3 and thereby regulate dopamine transport back from the synaptic cleft into the presynaptic terminal. The polypeptide is Synaptogyrin-3 (Mus musculus (Mouse)).